The sequence spans 136 residues: Translation initiation factor 5A (136 aa).

Lysine 37 carries the hypusine modification.

This sequence belongs to the eIF-5A family.

It is found in the cytoplasm. Functionally, functions by promoting the formation of the first peptide bond. In Thermococcus gammatolerans (strain DSM 15229 / JCM 11827 / EJ3), this protein is Translation initiation factor 5A (eIF5A).